The chain runs to 1824 residues: Treslin (1824 aa).

Disordered regions lie at residues 542-572, 590-622, 907-973, 1001-1035, 1098-1117, 1189-1221, 1293-1388, 1459-1518, 1617-1650, and 1803-1824; these read EFYQSSTAGSSGSLRSKKRGTQCTPVRQKMK, AQKTQGDSGSAGSGKGTEKGGKKSSGDRTKPGL, SPSK…SGES, RHSSVFYSSSQPRSRNLDRVVSSSQLSHSEGKGKF, AVGCRTPQSPRTPNRTVGDN, VPENQVNVPDSPVFAKRHSPRLVTPGKNSSPEE, PFCN…DDDK, FEGK…QSSP, TPTHHPTSSQSPLASPLTPSPQSRGWPTPENLNS, and PLCQPRRRRTPSRTYSRKKLLD. Residues 546 to 555 are compositionally biased toward low complexity; it reads SSTAGSSGSL. A compositionally biased stretch (polar residues) spans 562–572; the sequence is TQCTPVRQKMK. The segment covering 605–619 has biased composition (basic and acidic residues); the sequence is GTEKGGKKSSGDRTK. The span at 907 to 921 shows a compositional bias: polar residues; it reads SPSKKSKMPRSQSVS. Basic and acidic residues predominate over residues 932–952; it reads SDVDNDDRHTLLTKKVSETPL. 2 stretches are compositionally biased toward polar residues: residues 1005–1014 and 1103–1114; these read VFYSSSQPRS and TPQSPRTPNRTV. A compositionally biased stretch (polar residues) spans 1319-1345; the sequence is RSGNTPVKESCSPSSNSQGITGTSPSP. Residues 1347 to 1370 are compositionally biased toward low complexity; it reads KSLSSAVAKSSPSPSFGPSRSGVG. The segment covering 1462 to 1472 has biased composition (polar residues); the sequence is KQTTSTGTPLT. The span at 1480–1490 shows a compositional bias: basic and acidic residues; that stretch reads TPDRRQREAEA. Composition is skewed to polar residues over residues 1617 to 1629 and 1636 to 1650; these read TPTHHPTSSQSPL and SPQSRGWPTPENLNS. The segment covering 1807–1824 has biased composition (basic residues); the sequence is PRRRRTPSRTYSRKKLLD.

Belongs to the treslin family. In terms of assembly, interacts with topbp1 (via BRCT domains); interaction takes place in a cdk2-dependent manner. Component of the replisome complex.

The protein resides in the nucleus. In terms of biological role, regulator of DNA replication and S/M and G2/M checkpoints. Regulates the triggering of DNA replication initiation via its interaction with topbp1 by participating in cdk2-mediated loading of cdc45l onto replication origins. Required for the transition from pre-replication complex (pre-RC) to pre-initiation complex (pre-IC). Required to prevent mitotic entry after treatment with ionizing radiation. The protein is Treslin (ticrr) of Danio rerio (Zebrafish).